Here is a 559-residue protein sequence, read N- to C-terminus: Protein NRT1/ PTR FAMILY 2.8 (559 aa).

11 helical membrane-spanning segments follow: residues 57 to 77 (GVFLVNVINIWFGSCNILTLA), 92 to 112 (LLLGSIASFIGMGIFALTAAL), 132 to 152 (KWQLGVLFSGLGLLAIGAGGV), 178 to 198 (FFNWWYFSFTVALVIALTGVV), 206 to 226 (WVIGFVIPTACLALSITTFVI), 321 to 341 (LKCVTAILPVWVTGIACFILT), 374 to 394 (VSMITLAIWISLYECVIIPIV), 404 to 424 (LTLKHRIEIVMGIICMIVAGF), 437 to 457 (GSFVSPVSIVMLLPQFALAGL), 481 to 501 (VAGAIFFLSSSIASYICTLLI), and 529 to 549 (YFFIIAGIQVANLLYFRLFAS).

The protein belongs to the major facilitator superfamily. Proton-dependent oligopeptide transporter (POT/PTR) (TC 2.A.17) family. As to expression, expressed in flowers.

The protein resides in the membrane. In Arabidopsis thaliana (Mouse-ear cress), this protein is Protein NRT1/ PTR FAMILY 2.8 (NPF2.8).